Reading from the N-terminus, the 204-residue chain is Urease accessory protein UreG (204 aa).

15-22 contacts GTP; the sequence is GPVGSGKT.

The protein belongs to the SIMIBI class G3E GTPase family. UreG subfamily. In terms of assembly, homodimer. UreD, UreF and UreG form a complex that acts as a GTP-hydrolysis-dependent molecular chaperone, activating the urease apoprotein by helping to assemble the nickel containing metallocenter of UreC. The UreE protein probably delivers the nickel.

The protein localises to the cytoplasm. Its function is as follows. Facilitates the functional incorporation of the urease nickel metallocenter. This process requires GTP hydrolysis, probably effectuated by UreG. The chain is Urease accessory protein UreG from Methylobacterium sp. (strain 4-46).